A 278-amino-acid chain; its full sequence is Non-homologous end joining protein Ku (278 aa).

Residues 9–172 (ISFGLVNIPV…MHFAQELVDV (164 aa)) form the Ku domain. Positions 255 to 278 (NQTGAGAKKKPAKTAKRGKSRKAA) are disordered. Residues 261 to 278 (AKKKPAKTAKRGKSRKAA) show a composition bias toward basic residues.

This sequence belongs to the prokaryotic Ku family. As to quaternary structure, homodimer. Interacts with LigD.

Functionally, with LigD forms a non-homologous end joining (NHEJ) DNA repair enzyme, which repairs dsDNA breaks with reduced fidelity. Binds linear dsDNA with 5'- and 3'- overhangs but not closed circular dsDNA nor ssDNA. Recruits and stimulates the ligase activity of LigD. This Opitutus terrae (strain DSM 11246 / JCM 15787 / PB90-1) protein is Non-homologous end joining protein Ku.